The sequence spans 541 residues: Eukaryotic translation initiation factor 3 subunit L (541 aa).

Residues 308 to 516 enclose the PCI domain; the sequence is TFSDILLYIQ…IHIADTKVSH (209 aa).

This sequence belongs to the eIF-3 subunit L family. As to quaternary structure, component of the eukaryotic translation initiation factor 3 (eIF-3) complex. The eIF-3 complex interacts with pix.

The protein resides in the cytoplasm. Its function is as follows. Component of the eukaryotic translation initiation factor 3 (eIF-3) complex, which is involved in protein synthesis of a specialized repertoire of mRNAs and, together with other initiation factors, stimulates binding of mRNA and methionyl-tRNAi to the 40S ribosome. The eIF-3 complex specifically targets and initiates translation of a subset of mRNAs involved in cell proliferation. This is Eukaryotic translation initiation factor 3 subunit L from Drosophila persimilis (Fruit fly).